Reading from the N-terminus, the 430-residue chain is Asparagine--tRNA ligase (430 aa).

This sequence belongs to the class-II aminoacyl-tRNA synthetase family. In terms of assembly, homodimer.

The protein localises to the cytoplasm. The enzyme catalyses tRNA(Asn) + L-asparagine + ATP = L-asparaginyl-tRNA(Asn) + AMP + diphosphate + H(+). The sequence is that of Asparagine--tRNA ligase from Staphylococcus aureus (strain bovine RF122 / ET3-1).